The sequence spans 256 residues: Thiazole synthase (256 aa).

The Schiff-base intermediate with DXP role is filled by K95. 1-deoxy-D-xylulose 5-phosphate is bound by residues G156, 182–183 (AG), and 204–205 (NT).

This sequence belongs to the ThiG family. As to quaternary structure, homotetramer. Forms heterodimers with either ThiH or ThiS.

The protein localises to the cytoplasm. The catalysed reaction is [ThiS sulfur-carrier protein]-C-terminal-Gly-aminoethanethioate + 2-iminoacetate + 1-deoxy-D-xylulose 5-phosphate = [ThiS sulfur-carrier protein]-C-terminal Gly-Gly + 2-[(2R,5Z)-2-carboxy-4-methylthiazol-5(2H)-ylidene]ethyl phosphate + 2 H2O + H(+). The protein operates within cofactor biosynthesis; thiamine diphosphate biosynthesis. In terms of biological role, catalyzes the rearrangement of 1-deoxy-D-xylulose 5-phosphate (DXP) to produce the thiazole phosphate moiety of thiamine. Sulfur is provided by the thiocarboxylate moiety of the carrier protein ThiS. In vitro, sulfur can be provided by H(2)S. This chain is Thiazole synthase, found in Shigella flexneri.